A 1108-amino-acid polypeptide reads, in one-letter code: DNA-directed RNA polymerase subunit beta (1108 aa).

A disordered region spans residues 1081 to 1108 (SPRRTPARPTIDYSALDDTDDKEGATTF).

This sequence belongs to the RNA polymerase beta chain family. In terms of assembly, in cyanobacteria the RNAP catalytic core is composed of 2 alpha, 1 beta, 1 beta', 1 gamma and 1 omega subunit. When a sigma factor is associated with the core the holoenzyme is formed, which can initiate transcription.

It catalyses the reaction RNA(n) + a ribonucleoside 5'-triphosphate = RNA(n+1) + diphosphate. DNA-dependent RNA polymerase catalyzes the transcription of DNA into RNA using the four ribonucleoside triphosphates as substrates. The protein is DNA-directed RNA polymerase subunit beta of Thermosynechococcus vestitus (strain NIES-2133 / IAM M-273 / BP-1).